We begin with the raw amino-acid sequence, 511 residues long: 2,3-bisphosphoglycerate-independent phosphoglycerate mutase (511 aa).

Positions 14 and 64 each coordinate Mn(2+). The active-site Phosphoserine intermediate is serine 64. Substrate-binding positions include histidine 125, 155-156, arginine 187, arginine 193, 259-262, and lysine 333; these read RD and RADR. 5 residues coordinate Mn(2+): aspartate 400, histidine 404, aspartate 441, histidine 442, and histidine 460.

This sequence belongs to the BPG-independent phosphoglycerate mutase family. As to quaternary structure, monomer. Requires Mn(2+) as cofactor.

It catalyses the reaction (2R)-2-phosphoglycerate = (2R)-3-phosphoglycerate. It functions in the pathway carbohydrate degradation; glycolysis; pyruvate from D-glyceraldehyde 3-phosphate: step 3/5. Catalyzes the interconversion of 2-phosphoglycerate and 3-phosphoglycerate. This is 2,3-bisphosphoglycerate-independent phosphoglycerate mutase from Pseudoalteromonas atlantica (strain T6c / ATCC BAA-1087).